The sequence spans 551 residues: Chaperonin GroEL (551 aa).

ATP-binding positions include 30-33 (TLGP), K51, 87-91 (DGTTT), G415, and D496.

The protein belongs to the chaperonin (HSP60) family. In terms of assembly, forms a cylinder of 14 subunits composed of two heptameric rings stacked back-to-back. Interacts with the co-chaperonin GroES.

It is found in the cytoplasm. It carries out the reaction ATP + H2O + a folded polypeptide = ADP + phosphate + an unfolded polypeptide.. Together with its co-chaperonin GroES, plays an essential role in assisting protein folding. The GroEL-GroES system forms a nano-cage that allows encapsulation of the non-native substrate proteins and provides a physical environment optimized to promote and accelerate protein folding. The polypeptide is Chaperonin GroEL (Maricaulis maris (strain MCS10) (Caulobacter maris)).